Reading from the N-terminus, the 316-residue chain is Ribosomal protein L11 methyltransferase (316 aa).

Residues Thr157, Gly178, Asp200, and Asn243 each coordinate S-adenosyl-L-methionine.

The protein belongs to the methyltransferase superfamily. PrmA family.

The protein resides in the cytoplasm. It carries out the reaction L-lysyl-[protein] + 3 S-adenosyl-L-methionine = N(6),N(6),N(6)-trimethyl-L-lysyl-[protein] + 3 S-adenosyl-L-homocysteine + 3 H(+). Methylates ribosomal protein L11. This Streptococcus pneumoniae (strain P1031) protein is Ribosomal protein L11 methyltransferase.